Consider the following 420-residue polypeptide: MLAWSSPDVPSLDDPGECPREVRVRDTATGELTPAGHDGRASMYVCGITPYDSTHLGHANTYVSFDLLVRAWRDAGLAVTYVQNVTDVDDPLLERAAATGVDWRQLAADQIELFHHDMVALRVVAPEHYIGAVESVPDVVRAVERMLADRAAYRVGAAADGAGDGDVYAALSADPRFGSLGSLDEAEMLELFGERGGDPDRLGKQAPLDPLLWRVEREEEPSWPGESLGRGRPGWHIECATIAARFLGVPFDVQGGGTDLEFPHHEMSESHLRVLTATAHPARAHVHGGMVAYQGHKMSKSRGNLVFVSELVASGVDPMAVRLVILAHHYAEDWEYEAGALGLAEERLATWRAALAQGSGPSGADVVAGVRAALANDLDAPGAVAVVDDWAAAAIAGSGDDAAAGATVARAVDALLGVAL.

Zn(2+) is bound at residue cysteine 46. L-cysteinyl-5'-AMP is bound by residues 46-49 (CGIT), threonine 61, and 84-86 (NVT). A 'HIGH' region motif is present at residues 48-58 (ITPYDSTHLGH). The short motif at 194–199 (ERGGDP) is the 'ERGGDP' region element. Tryptophan 235 is a binding site for L-cysteinyl-5'-AMP. Cysteine 239 provides a ligand contact to Zn(2+). 257 to 259 (GTD) is a binding site for L-cysteinyl-5'-AMP. Histidine 264 is a Zn(2+) binding site. Valine 291 provides a ligand contact to L-cysteinyl-5'-AMP. A 'KMSKS' region motif is present at residues 297 to 301 (KMSKS).

The protein belongs to the class-I aminoacyl-tRNA synthetase family. MshC subfamily. Monomer. Zn(2+) is required as a cofactor.

The catalysed reaction is 1D-myo-inositol 2-amino-2-deoxy-alpha-D-glucopyranoside + L-cysteine + ATP = 1D-myo-inositol 2-(L-cysteinylamino)-2-deoxy-alpha-D-glucopyranoside + AMP + diphosphate + H(+). Its function is as follows. Catalyzes the ATP-dependent condensation of GlcN-Ins and L-cysteine to form L-Cys-GlcN-Ins. The protein is L-cysteine:1D-myo-inositol 2-amino-2-deoxy-alpha-D-glucopyranoside ligase of Beutenbergia cavernae (strain ATCC BAA-8 / DSM 12333 / CCUG 43141 / JCM 11478 / NBRC 16432 / NCIMB 13614 / HKI 0122).